We begin with the raw amino-acid sequence, 229 residues long: Sugar fermentation stimulation protein homolog (229 aa).

This sequence belongs to the SfsA family.

This chain is Sugar fermentation stimulation protein homolog, found in Clostridium novyi (strain NT).